Consider the following 604-residue polypeptide: Glutamyl-tRNA(Gln) amidotransferase subunit B, mitochondrial (604 aa).

A mitochondrion-targeting transit peptide spans 1 to 48 (MIRQCLSRRGAYSRYRLAARGVELAEPFHHQSSRPQGRRNWSSSPRCS). The segment at 28–57 (FHHQSSRPQGRRNWSSSPRCSLDIRTDTPR) is disordered. A compositionally biased stretch (polar residues) spans 33-46 (SRPQGRRNWSSSPR).

Belongs to the GatB/GatE family. GatB subfamily. As to quaternary structure, subunit of the heterotrimeric GatCAB amidotransferase (AdT) complex, composed of A, B and C subunits.

It is found in the mitochondrion. It carries out the reaction L-glutamyl-tRNA(Gln) + L-glutamine + ATP + H2O = L-glutaminyl-tRNA(Gln) + L-glutamate + ADP + phosphate + H(+). Its function is as follows. Allows the formation of correctly charged Gln-tRNA(Gln) through the transamidation of misacylated Glu-tRNA(Gln) in the mitochondria. The reaction takes place in the presence of glutamine and ATP through an activated gamma-phospho-Glu-tRNA(Gln). The protein is Glutamyl-tRNA(Gln) amidotransferase subunit B, mitochondrial of Ajellomyces dermatitidis (strain ER-3 / ATCC MYA-2586) (Blastomyces dermatitidis).